A 476-amino-acid polypeptide reads, in one-letter code: Proline--tRNA ligase 2 (476 aa).

It belongs to the class-II aminoacyl-tRNA synthetase family. ProS type 3 subfamily. Homodimer.

It is found in the cytoplasm. The enzyme catalyses tRNA(Pro) + L-proline + ATP = L-prolyl-tRNA(Pro) + AMP + diphosphate. In terms of biological role, catalyzes the attachment of proline to tRNA(Pro) in a two-step reaction: proline is first activated by ATP to form Pro-AMP and then transferred to the acceptor end of tRNA(Pro). The sequence is that of Proline--tRNA ligase 2 from Bacillus cereus (strain ATCC 10987 / NRS 248).